A 396-amino-acid chain; its full sequence is Ribosomal RNA large subunit methyltransferase I (396 aa).

The 78-residue stretch at 2–79 (SIRIKLKPGR…KEEAIDRDFF (78 aa)) folds into the PUA domain.

It belongs to the methyltransferase superfamily. RlmI family.

Its subcellular location is the cytoplasm. It catalyses the reaction cytidine(1962) in 23S rRNA + S-adenosyl-L-methionine = 5-methylcytidine(1962) in 23S rRNA + S-adenosyl-L-homocysteine + H(+). In terms of biological role, specifically methylates the cytosine at position 1962 (m5C1962) of 23S rRNA. The polypeptide is Ribosomal RNA large subunit methyltransferase I (Shewanella amazonensis (strain ATCC BAA-1098 / SB2B)).